The chain runs to 91 residues: UPF0358 protein Sca_0738 (91 aa).

Belongs to the UPF0358 family.

This chain is UPF0358 protein Sca_0738, found in Staphylococcus carnosus (strain TM300).